Reading from the N-terminus, the 989-residue chain is Bifunctional glutamine synthetase adenylyltransferase/adenylyl-removing enzyme (989 aa).

The interval 1-473 (MRGPLEPDSA…HYANLFEDVA (473 aa)) is adenylyl removase. The interval 479–989 (DADLMFPPDE…FERILETAAE (511 aa)) is adenylyl transferase.

The protein belongs to the GlnE family. Mg(2+) serves as cofactor.

It catalyses the reaction [glutamine synthetase]-O(4)-(5'-adenylyl)-L-tyrosine + phosphate = [glutamine synthetase]-L-tyrosine + ADP. It carries out the reaction [glutamine synthetase]-L-tyrosine + ATP = [glutamine synthetase]-O(4)-(5'-adenylyl)-L-tyrosine + diphosphate. Involved in the regulation of glutamine synthetase GlnA, a key enzyme in the process to assimilate ammonia. When cellular nitrogen levels are high, the C-terminal adenylyl transferase (AT) inactivates GlnA by covalent transfer of an adenylyl group from ATP to specific tyrosine residue of GlnA, thus reducing its activity. Conversely, when nitrogen levels are low, the N-terminal adenylyl removase (AR) activates GlnA by removing the adenylyl group by phosphorolysis, increasing its activity. The regulatory region of GlnE binds the signal transduction protein PII (GlnB) which indicates the nitrogen status of the cell. The protein is Bifunctional glutamine synthetase adenylyltransferase/adenylyl-removing enzyme of Xanthobacter autotrophicus (strain ATCC BAA-1158 / Py2).